A 118-amino-acid polypeptide reads, in one-letter code: Small integral membrane protein 17 (118 aa).

Residues Met1–Phe84 form a disordered region. Over residues Leu13–Glu42 the composition is skewed to basic and acidic residues. A helical membrane pass occupies residues Ile96–Phe116.

It is found in the membrane. The sequence is that of Small integral membrane protein 17 (SMIM17) from Homo sapiens (Human).